The chain runs to 357 residues: Protein-arginine kinase (357 aa).

Residues 24-255 (IVISTRLRIA…RQIIEQERVA (232 aa)) form the Phosphagen kinase C-terminal domain. ATP is bound by residues 27-31 (STRLR), His92, Arg126, 177-181 (RASVM), and 208-213 (RGIYGE). Residues 338 to 343 (RDERRA) carry the RDXXRA motif of the pArg binding pocket involved in allosteric regulation motif.

Belongs to the ATP:guanido phosphotransferase family.

It catalyses the reaction L-arginyl-[protein] + ATP = N(omega)-phospho-L-arginyl-[protein] + ADP + H(+). Appears to be allosterically activated by the binding of pArg-containing polypeptides to the pArg-binding pocket localized in the C-terminal domain of McsB. Catalyzes the specific phosphorylation of arginine residues in proteins. This is Protein-arginine kinase from Brevibacillus brevis (strain 47 / JCM 6285 / NBRC 100599).